The primary structure comprises 354 residues: Peptide chain release factor 1 (354 aa).

Glutamine 230 carries the post-translational modification N5-methylglutamine. The interval lysine 282–arginine 301 is disordered.

The protein belongs to the prokaryotic/mitochondrial release factor family. Post-translationally, methylated by PrmC. Methylation increases the termination efficiency of RF1.

Its subcellular location is the cytoplasm. Peptide chain release factor 1 directs the termination of translation in response to the peptide chain termination codons UAG and UAA. The polypeptide is Peptide chain release factor 1 (Leptospira borgpetersenii serovar Hardjo-bovis (strain L550)).